Here is a 471-residue protein sequence, read N- to C-terminus: Metalloprotease TIKI homolog (471 aa).

A signal peptide spans 1–24 (MAAFTLWILVLNVFLLGFQARKLA). At 25-449 (SNLKFPIQKC…SRKAAASCTP (425 aa)) the chain is on the extracellular side. N-linked (GlcNAc...) asparagine glycans are attached at residues Asn-226, Asn-235, Asn-284, and Asn-342. Positions 369-402 (KAKKSLNTRRERRKGCRGRRKKSKRCQKKKKRKR) are enriched in basic residues. The interval 369–406 (KAKKSLNTRRERRKGCRGRRKKSKRCQKKKKRKRPDYS) is disordered. The helical transmembrane segment at 450–470 (IWTVSLALTCAVTCLLTYSGF) threads the bilayer. A topological domain (cytoplasmic) is located at residue Arg-471.

This sequence belongs to the TIKI family. Requires Mn(2+) as cofactor. Co(2+) is required as a cofactor.

It localises to the membrane. In terms of biological role, metalloprotease. The protein is Metalloprotease TIKI homolog of Nematostella vectensis (Starlet sea anemone).